A 159-amino-acid polypeptide reads, in one-letter code: Cyclic pyranopterin monophosphate synthase (159 aa).

Substrate is bound by residues 75 to 77 (LCH) and 113 to 114 (ME). The active site involves Asp128.

Belongs to the MoaC family. As to quaternary structure, homohexamer; trimer of dimers.

The catalysed reaction is (8S)-3',8-cyclo-7,8-dihydroguanosine 5'-triphosphate = cyclic pyranopterin phosphate + diphosphate. The protein operates within cofactor biosynthesis; molybdopterin biosynthesis. Catalyzes the conversion of (8S)-3',8-cyclo-7,8-dihydroguanosine 5'-triphosphate to cyclic pyranopterin monophosphate (cPMP). This chain is Cyclic pyranopterin monophosphate synthase, found in Vibrio atlanticus (strain LGP32) (Vibrio splendidus (strain Mel32)).